The chain runs to 156 residues: Succinate dehydrogenase assembly factor 2-B, mitochondrial (156 aa).

The transit peptide at 1–24 (MLRQFIISRVGRRLQLPMITQSRL) directs the protein to the mitochondrion.

It belongs to the SDHAF2 family. Interacts with the flavoprotein subunit within the SDH catalytic dimer.

The protein localises to the mitochondrion matrix. Its function is as follows. Plays an essential role in the assembly of succinate dehydrogenase (SDH), an enzyme complex (also referred to as respiratory complex II) that is a component of both the tricarboxylic acid (TCA) cycle and the mitochondrial electron transport chain, and which couples the oxidation of succinate to fumarate with the reduction of ubiquinone (coenzyme Q) to ubiquinol. Required for flavinylation (covalent attachment of FAD) of the flavoprotein subunit of the SDH catalytic dimer. This chain is Succinate dehydrogenase assembly factor 2-B, mitochondrial, found in Drosophila sechellia (Fruit fly).